The sequence spans 724 residues: Catalase-peroxidase (724 aa).

Positions 98-226 (WHSAGTYRIA…LAAVMMGLIY (129 aa)) form a cross-link, tryptophyl-tyrosyl-methioninium (Trp-Tyr) (with M-252). H99 functions as the Proton acceptor in the catalytic mechanism. The segment at residues 226-252 (YVNPEGVDGNPDPLKTAQDMRVTFARM) is a cross-link (tryptophyl-tyrosyl-methioninium (Tyr-Met) (with W-98)). H267 contacts heme b.

It belongs to the peroxidase family. Peroxidase/catalase subfamily. Homodimer or homotetramer. It depends on heme b as a cofactor. In terms of processing, formation of the three residue Trp-Tyr-Met cross-link is important for the catalase, but not the peroxidase activity of the enzyme.

The catalysed reaction is H2O2 + AH2 = A + 2 H2O. It carries out the reaction 2 H2O2 = O2 + 2 H2O. Bifunctional enzyme with both catalase and broad-spectrum peroxidase activity. This is Catalase-peroxidase from Vibrio cholerae serotype O1 (strain ATCC 39315 / El Tor Inaba N16961).